A 185-amino-acid chain; its full sequence is MNSDLTSFDKIEQKIGGSRKTSNYIIGGMLTIGGIGFLLASISSYTGKDLLPLGNPSTLLFIPQGIIMGAYGVVANLLNFYLWYMVYINFGSGSNSFNKSSKSVEIKRKGLFKDIDVKLNFDEIKSVKLDISEGFNPRRRIALVLKGRKKPLPLSGAGELKPLLQVEEEGARLAKFLNVNLEGLK.

2 consecutive transmembrane segments (helical) span residues 24–44 (YIIG…SISS) and 66–86 (IIMG…WYMV).

This sequence belongs to the Ycf4 family.

The protein localises to the cellular thylakoid membrane. In terms of biological role, seems to be required for the assembly of the photosystem I complex. This is Photosystem I assembly protein Ycf4 from Prochlorococcus marinus (strain MIT 9312).